Here is a 570-residue protein sequence, read N- to C-terminus: Probable glucomannan 4-beta-mannosyltransferase 11 (570 aa).

A helical transmembrane segment spans residues leucine 57–valine 77. Aspartate 157 is a catalytic residue. Positions 216 and 218 each coordinate substrate. Residue aspartate 310 is part of the active site. Transmembrane regions (helical) follow at residues isoleucine 389–leucine 409, isoleucine 412–valine 432, tyrosine 522–alanine 542, and isoleucine 548–cysteine 568.

This sequence belongs to the glycosyltransferase 2 family. Plant cellulose synthase-like A subfamily.

The protein resides in the golgi apparatus membrane. It catalyses the reaction GDP-mannose + (glucomannan)n = GDP + (glucomannan)n+1.. Its function is as follows. Probable mannan synthase which consists of a 4-beta-mannosyltransferase activity on mannan using GDP-mannose. The beta-1,4-mannan product is the backbone for galactomannan synthesis by galactomannan galactosyltransferase. Galactomannan is a noncellulosic polysaccharides of plant cell wall. This Oryza sativa subsp. japonica (Rice) protein is Probable glucomannan 4-beta-mannosyltransferase 11.